The primary structure comprises 173 residues: Ribosome maturation factor RimM (173 aa).

The 73-residue stretch at 98–170 (EGEFYWCDLI…IMTVSPTEGL (73 aa)) folds into the PRC barrel domain.

The protein belongs to the RimM family. Binds ribosomal protein uS19.

The protein resides in the cytoplasm. In terms of biological role, an accessory protein needed during the final step in the assembly of 30S ribosomal subunit, possibly for assembly of the head region. Essential for efficient processing of 16S rRNA. May be needed both before and after RbfA during the maturation of 16S rRNA. It has affinity for free ribosomal 30S subunits but not for 70S ribosomes. The chain is Ribosome maturation factor RimM from Geobacter metallireducens (strain ATCC 53774 / DSM 7210 / GS-15).